The following is a 245-amino-acid chain: 1-(5-phosphoribosyl)-5-[(5-phosphoribosylamino)methylideneamino] imidazole-4-carboxamide isomerase (245 aa).

Aspartate 8 functions as the Proton acceptor in the catalytic mechanism. Residue aspartate 129 is the Proton donor of the active site.

Belongs to the HisA/HisF family.

The protein resides in the cytoplasm. It catalyses the reaction 1-(5-phospho-beta-D-ribosyl)-5-[(5-phospho-beta-D-ribosylamino)methylideneamino]imidazole-4-carboxamide = 5-[(5-phospho-1-deoxy-D-ribulos-1-ylimino)methylamino]-1-(5-phospho-beta-D-ribosyl)imidazole-4-carboxamide. Its pathway is amino-acid biosynthesis; L-histidine biosynthesis; L-histidine from 5-phospho-alpha-D-ribose 1-diphosphate: step 4/9. The protein is 1-(5-phosphoribosyl)-5-[(5-phosphoribosylamino)methylideneamino] imidazole-4-carboxamide isomerase of Heliobacterium modesticaldum (strain ATCC 51547 / Ice1).